The sequence spans 307 residues: Elongation factor Ts (307 aa).

The segment at 80-83 (TDFV) is involved in Mg(2+) ion dislocation from EF-Tu.

Belongs to the EF-Ts family.

Its subcellular location is the cytoplasm. Its function is as follows. Associates with the EF-Tu.GDP complex and induces the exchange of GDP to GTP. It remains bound to the aminoacyl-tRNA.EF-Tu.GTP complex up to the GTP hydrolysis stage on the ribosome. The protein is Elongation factor Ts of Bradyrhizobium sp. (strain ORS 278).